The chain runs to 532 residues: Apoptosis-inducing factor 1, mitochondrial (532 aa).

The N-terminal 26 residues, 1 to 26, are a transit peptide targeting the mitochondrion; it reads MIRNLTKLTKFTIGNRFYQSSSKGRF. The interval 63–84 is disordered; it reads STPSIDVKEKKSQPPKTKEDYQ. The interval 98–440 is FAD-dependent oxidoreductase; sequence YVIIGGGTAA…APYTYQPFFW (343 aa). FAD contacts are provided by residues 102–106, 128–129, Arg-136, and Lys-141; these read GGGTA and KE. An NAD(+)-binding site is contributed by Trp-160. Residues Val-188 and Arg-236 each coordinate FAD. Residues 260-263, Glu-288, and Gly-353 contribute to the NAD(+) site; that span reads GGFL. Position 392 (Asp-392) interacts with FAD. Residues 400-406 carry the Nuclear localization signal motif; it reads SLGVRRR. NAD(+) is bound by residues 408–409, Trp-440, and Glu-450; that span reads EH. FAD contacts are provided by residues 409-410 and Trp-440; that span reads HH.

It belongs to the FAD-dependent oxidoreductase family. FAD serves as cofactor.

It localises to the mitochondrion. The protein resides in the cytoplasm. The protein localises to the nucleus. It carries out the reaction A + NADH + H(+) = AH2 + NAD(+). In terms of biological role, probable NADH oxidoreductase that acts as a caspase-independent mitochondrial effector of apoptotic cell death. The chain is Apoptosis-inducing factor 1, mitochondrial (aif) from Dictyostelium discoideum (Social amoeba).